We begin with the raw amino-acid sequence, 222 residues long: Flagellar L-ring protein (222 aa).

Residues 1 to 21 form the signal peptide; the sequence is MQTFLYPRTWLILGLLLLGSG. Cys22 carries N-palmitoyl cysteine lipidation. Cys22 carries the S-diacylglycerol cysteine lipid modification.

This sequence belongs to the FlgH family. In terms of assembly, the basal body constitutes a major portion of the flagellar organelle and consists of four rings (L,P,S, and M) mounted on a central rod.

The protein localises to the cell outer membrane. It is found in the bacterial flagellum basal body. In terms of biological role, assembles around the rod to form the L-ring and probably protects the motor/basal body from shearing forces during rotation. The protein is Flagellar L-ring protein of Methylobacillus flagellatus (strain ATCC 51484 / DSM 6875 / VKM B-1610 / KT).